We begin with the raw amino-acid sequence, 263 residues long: Putative TATA-binding protein pB263R (263 aa).

It belongs to the asfivirus B263R family.

Its function is as follows. Putative TATA-binding protein. The polypeptide is Putative TATA-binding protein pB263R (African swine fever virus (isolate Tick/Malawi/Lil 20-1/1983) (ASFV)).